Consider the following 359-residue polypeptide: Guanine nucleotide-binding protein-like alpha-11 subunit (359 aa).

Gly2 is lipidated: N-myristoyl glycine. In terms of domain architecture, G-alpha spans 29–359 (KLIKILMMGN…YVKKILEDTI (331 aa)). A G1 motif region spans residues 32–45 (KILMMGNENSAKST). Position 44 (Ser44) interacts with Mg(2+). The interval 176–185 (DIIRCSKNNQ) is G2 motif. GTP-binding positions include 178-185 (IRCSKNNQ), 204-208 (DTGNQ), and 281-284 (NKKE). The interval 200–209 (FVFVDTGNQK) is G3 motif. Positions 277-284 (IVLFNKKE) are G4 motif. Positions 337 to 342 (FNSSDT) are G5 motif.

This sequence belongs to the G-alpha family.

This Dictyostelium discoideum (Social amoeba) protein is Guanine nucleotide-binding protein-like alpha-11 subunit (gpaK).